The chain runs to 119 residues: MTVNSIGEYTATPRDVQANFNGMQLLYLYWEEHLMYCSALAFLVAPGMPFAEFLEQVLKPAIHAHPDSAKIDFSQALWQLNDQPFTPDYAASLEANGIDHKSMLRLNTPGLNGIQGSCS.

In terms of assembly, the multicomponent enzyme phenol hydroxylase is formed by DmpL (P1 component), DmpM (P2 component), DmpN (P3 component), DmpO (P4 component) and DmpP (P5 component). The oxygenase component is a dimer composed of three subunits, DmpL, DmpN and DmpO (DmpLNO).

The enzyme catalyses phenol + NADH + O2 + H(+) = catechol + NAD(+) + H2O. It participates in aromatic compound metabolism; phenol degradation. With respect to regulation, requires DmpM for efficient turnover. The activity of DmpLNO oxygenase is inhibited by dithiothreitol (DTT) by a mechanism apparently involving H(2)O(2) generation. In terms of biological role, part of a multicomponent enzyme which catalyzes the degradation of phenol and some of its methylated derivatives. DmpL, DmpN and DmpO form the oxygenase component of the complex. Required for growth on phenol and for in vitro phenol hydroxylase activity. The sequence is that of Phenol 2-monooxygenase, oxygenase component DmpO from Pseudomonas sp. (strain CF600).